Consider the following 131-residue polypeptide: ATP synthase epsilon chain (131 aa).

It belongs to the ATPase epsilon chain family. In terms of assembly, F-type ATPases have 2 components, CF(1) - the catalytic core - and CF(0) - the membrane proton channel. CF(1) has five subunits: alpha(3), beta(3), gamma(1), delta(1), epsilon(1). CF(0) has three main subunits: a, b and c.

The protein resides in the cell inner membrane. Functionally, produces ATP from ADP in the presence of a proton gradient across the membrane. This is ATP synthase epsilon chain from Helicobacter hepaticus (strain ATCC 51449 / 3B1).